Here is a 96-residue protein sequence, read N- to C-terminus: uncharacterized protein (96 aa).

A helical membrane pass occupies residues 53 to 71 (VLLMPLLQSFVLSLALMGV).

It localises to the membrane. This is an uncharacterized protein from Saccharomyces cerevisiae (strain ATCC 204508 / S288c) (Baker's yeast).